The primary structure comprises 95 residues: Small ribosomal subunit protein bS6 (95 aa).

This sequence belongs to the bacterial ribosomal protein bS6 family.

Its function is as follows. Binds together with bS18 to 16S ribosomal RNA. The chain is Small ribosomal subunit protein bS6 from Rhodococcus jostii (strain RHA1).